We begin with the raw amino-acid sequence, 386 residues long: Protein phosphatase methylesterase 1 (386 aa).

The disordered stretch occupies residues 1-38; it reads MSALEKSMHLGRLPSRPPLPGSGGSQSGAKMRMGPGRK. The residue at position 15 (Ser-15) is a Phosphoserine. Arg-16 is modified (asymmetric dimethylarginine; alternate). Arg-16 is subject to Omega-N-methylarginine; alternate. At Ser-42 the chain carries Phosphoserine. Catalysis depends on residues Ser-156 and Asp-181. The segment covering 254-265 has biased composition (acidic residues); the sequence is IIEEEEEDEEGS. Residues 254 to 280 form a disordered region; sequence IIEEEEEDEEGSESISKRKKEDDMETK. A compositionally biased stretch (basic and acidic residues) spans 268–280; the sequence is ISKRKKEDDMETK. His-349 is an active-site residue.

The protein belongs to the AB hydrolase superfamily. In terms of assembly, binds PPP2CA and PPP2CB. Phosphorylated by SIK1 following increases in intracellular sodium, leading to dissociation from the protein phosphatase 2A (PP2A) complex and subsequent dephosphorylation of sodium/potassium-transporting ATPase ATP1A1.

It carries out the reaction [phosphatase 2A protein]-C-terminal L-leucine methyl ester + H2O = [phosphatase 2A protein]-C-terminal L-leucine + methanol + H(+). Its function is as follows. Demethylates proteins that have been reversibly carboxymethylated. Demethylates PPP2CB (in vitro) and PPP2CA. Binding to PPP2CA displaces the manganese ion and inactivates the enzyme. The sequence is that of Protein phosphatase methylesterase 1 (PPME1) from Homo sapiens (Human).